The primary structure comprises 149 residues: Transcriptional repressor NrdR (149 aa).

A zinc finger spans residues 3–34; it reads CPFCAAEETKVVDSRLAADGYQIRRRRECTSC. Positions 49–139 constitute an ATP-cone domain; the sequence is PYVIKNNGNR…VYLSFDDIEE (91 aa).

It belongs to the NrdR family. Zn(2+) is required as a cofactor.

Its function is as follows. Negatively regulates transcription of bacterial ribonucleotide reductase nrd genes and operons by binding to NrdR-boxes. In Actinobacillus pleuropneumoniae serotype 5b (strain L20), this protein is Transcriptional repressor NrdR.